Reading from the N-terminus, the 171-residue chain is LIM domain transcription factor LMO4-A (171 aa).

The span at 1-19 (MVNNRSSESTTTAVSSNGS) shows a compositional bias: polar residues. The segment at 1–21 (MVNNRSSESTTTAVSSNGSPP) is disordered. 2 consecutive LIM zinc-binding domains span residues 22–84 (KACA…LFGN) and 86–148 (GACN…GLLN).

In terms of tissue distribution, at the start of gastrulation (stage 10), expressed in the mesodermal marginal zone. Shortly after (stage 11), expression is down-regulated in the dorsal most region. During neurulation, expressed in the neural plate and ventral epidermis. At late neurula stages, also expressed more rostrally, and then in the brain, migrating neural crests and ventral epidermis.

Acts as a positive cofactor of GATA transcription factors to establish the identity of the ventral mesoderm during gastrulation. Down-regulation in the dorsal mesoderm is necessary for the proper formation of this territory since, when present, lmo4 may bind ldb1 and restrict the availability of this cofactor for Spemman organizer transcription factors. At neurula stages, suppresses primary neuron differentiation and modulates gene expression at the Isthmic Organizer of the midbrain-hindbrain boundary. The chain is LIM domain transcription factor LMO4-A (lmo4-a) from Xenopus laevis (African clawed frog).